We begin with the raw amino-acid sequence, 679 residues long: Enzymatic polyprotein (679 aa).

The interval 40 to 130 (LHCFVDTGAS…LYEPFIQFTD (91 aa)) is protease. Aspartate 45 is an active-site residue. One can recognise a Reverse transcriptase domain in the interval 272–452 (LKVIKPSKSP…KKINFLGLEI (181 aa)).

Belongs to the caulimoviridae enzymatic polyprotein family.

The enzyme catalyses DNA(n) + a 2'-deoxyribonucleoside 5'-triphosphate = DNA(n+1) + diphosphate. Functionally, encodes for at least two polypeptides: protease (PR) and reverse transcriptase (RT). The protease processes the polyprotein in cis. Reverse transcriptase is multifunctional enzyme that converts the viral RNA genome into dsDNA in viral cytoplasmic capsids. This enzyme displays a DNA polymerase activity that can copy either DNA or RNA templates, and a ribonuclease H (RNase H) activity that cleaves the RNA strand of RNA-DNA heteroduplexes in a partially processive 3'- to 5'-endonucleasic mode. Neo-synthesized pregenomic RNA (pgRNA) are encapsidated, and reverse-transcribed inside the nucleocapsid. Partial (+)DNA is synthesized from the (-)DNA template and generates the relaxed circular DNA (RC-DNA) genome. After budding and infection, the RC-DNA migrates in the nucleus, and is converted into a plasmid-like covalently closed circular DNA (cccDNA). In Cauliflower mosaic virus (strain CM-1841) (CaMV), this protein is Enzymatic polyprotein.